A 293-amino-acid polypeptide reads, in one-letter code: 4-hydroxy-tetrahydrodipicolinate synthase (293 aa).

Thr-45 provides a ligand contact to pyruvate. Tyr-133 functions as the Proton donor/acceptor in the catalytic mechanism. Lys-161 functions as the Schiff-base intermediate with substrate in the catalytic mechanism. Ile-204 contacts pyruvate.

The protein belongs to the DapA family. As to quaternary structure, homotetramer; dimer of dimers.

The protein localises to the cytoplasm. The enzyme catalyses L-aspartate 4-semialdehyde + pyruvate = (2S,4S)-4-hydroxy-2,3,4,5-tetrahydrodipicolinate + H2O + H(+). The protein operates within amino-acid biosynthesis; L-lysine biosynthesis via DAP pathway; (S)-tetrahydrodipicolinate from L-aspartate: step 3/4. Catalyzes the condensation of (S)-aspartate-beta-semialdehyde [(S)-ASA] and pyruvate to 4-hydroxy-tetrahydrodipicolinate (HTPA). This is 4-hydroxy-tetrahydrodipicolinate synthase from Yersinia pseudotuberculosis serotype I (strain IP32953).